A 395-amino-acid chain; its full sequence is S-adenosylmethionine synthase (395 aa).

H16 serves as a coordination point for ATP. D18 lines the Mg(2+) pocket. E44 is a binding site for K(+). Residues E57 and Q100 each contribute to the L-methionine site. Residues 100 to 110 (QSPDIAQGVDR) are flexible loop. Residues 167–169 (DAK), 233–234 (RF), D242, 248–249 (RK), A265, and K269 contribute to the ATP site. Residue D242 coordinates L-methionine. Residue K273 participates in L-methionine binding.

Belongs to the AdoMet synthase family. As to quaternary structure, homotetramer; dimer of dimers. Requires Mg(2+) as cofactor. K(+) is required as a cofactor.

It is found in the cytoplasm. It carries out the reaction L-methionine + ATP + H2O = S-adenosyl-L-methionine + phosphate + diphosphate. It participates in amino-acid biosynthesis; S-adenosyl-L-methionine biosynthesis; S-adenosyl-L-methionine from L-methionine: step 1/1. Its function is as follows. Catalyzes the formation of S-adenosylmethionine (AdoMet) from methionine and ATP. The overall synthetic reaction is composed of two sequential steps, AdoMet formation and the subsequent tripolyphosphate hydrolysis which occurs prior to release of AdoMet from the enzyme. The sequence is that of S-adenosylmethionine synthase from Burkholderia thailandensis (strain ATCC 700388 / DSM 13276 / CCUG 48851 / CIP 106301 / E264).